The chain runs to 67 residues: Prokaryotic ubiquitin-like protein Pup (67 aa).

Low complexity predominate over residues 1-13; it reads MAGQEQQQPQSRD. Residues 1–48 are disordered; that stretch reads MAGQEQQQPQSRDSQVDEDIPEAPPAPPEAQASASTEGVDDLLDEIDG. The interval 25 to 61 is ARC ATPase binding; sequence PAPPEAQASASTEGVDDLLDEIDGVLESNAEEFVRAF. Positions 38-48 are enriched in acidic residues; it reads GVDDLLDEIDG. Deamidated glutamine is present on glutamine 67. Residue glutamine 67 forms an Isoglutamyl lysine isopeptide (Gln-Lys) (interchain with K-? in acceptor proteins) linkage.

The protein belongs to the prokaryotic ubiquitin-like protein family. In terms of assembly, strongly interacts with the proteasome-associated ATPase ARC through a hydrophobic interface; the interacting region of Pup lies in its C-terminal half. There is one Pup binding site per ARC hexamer ring. In terms of processing, is modified by deamidation of its C-terminal glutamine to glutamate by the deamidase Dop, a prerequisite to the subsequent pupylation process.

It functions in the pathway protein degradation; proteasomal Pup-dependent pathway. Its function is as follows. Protein modifier that is covalently attached to lysine residues of substrate proteins, thereby targeting them for proteasomal degradation. The tagging system is termed pupylation. The chain is Prokaryotic ubiquitin-like protein Pup from Pseudarthrobacter chlorophenolicus (strain ATCC 700700 / DSM 12829 / CIP 107037 / JCM 12360 / KCTC 9906 / NCIMB 13794 / A6) (Arthrobacter chlorophenolicus).